A 389-amino-acid polypeptide reads, in one-letter code: Growth/differentiation factor 2 (389 aa).

An N-terminal signal peptide occupies residues 1–20 (MWRVGHLLLLMSIVFRITEE). The propeptide occupies 21-280 (KSLGDAGSLE…PVSNRHRRRK (260 aa)). Residues Asn65, Asn118, Asn127, and Asn232 are each glycosylated (N-linked (GlcNAc...) asparagine). A compositionally biased stretch (polar residues) spans 263–272 (QQQVGNQAPV). Residues 263–284 (QQQVGNQAPVSNRHRRRKRKAK) are disordered. Over residues 274-284 (NRHRRRKRKAK) the composition is skewed to basic residues. Disulfide bonds link Cys288/Cys354, Cys317/Cys386, and Cys321/Cys388. N-linked (GlcNAc...) asparagine glycosylation is present at Asn342.

The protein belongs to the TGF-beta family. Homodimer; disulfide-linked. A reversible disulfide bond can be formed between the two subunits in the homodimer; this has no effect on gdf2 activity.

The protein localises to the secreted. Functionally, potent circulating inhibitor of angiogenesis. Signals through the type I activin receptor ACVRL1 but not other Alks. Signaling through SMAD1 in endothelial cells requires TGF-beta coreceptor endoglin/eng. In Danio rerio (Zebrafish), this protein is Growth/differentiation factor 2 (gdf2).